The sequence spans 167 residues: Xanthine-guanine phosphoribosyltransferase (167 aa).

5-phospho-alpha-D-ribose 1-diphosphate is bound by residues 47–48, Gln-79, and 102–110; these read RG and DDLVDSGKT. Gln-79 is a GMP binding site. Asp-103 lines the Mg(2+) pocket. Residues Asp-106 and Ile-149 each contribute to the guanine site. Positions 106 and 149 each coordinate xanthine. GMP contacts are provided by residues 106–110 and 148–149; these read DSGKT and WI.

Belongs to the purine/pyrimidine phosphoribosyltransferase family. XGPT subfamily. In terms of assembly, homotetramer. The cofactor is Mg(2+).

Its subcellular location is the cell inner membrane. It carries out the reaction GMP + diphosphate = guanine + 5-phospho-alpha-D-ribose 1-diphosphate. It catalyses the reaction XMP + diphosphate = xanthine + 5-phospho-alpha-D-ribose 1-diphosphate. The enzyme catalyses IMP + diphosphate = hypoxanthine + 5-phospho-alpha-D-ribose 1-diphosphate. The protein operates within purine metabolism; GMP biosynthesis via salvage pathway; GMP from guanine: step 1/1. It functions in the pathway purine metabolism; XMP biosynthesis via salvage pathway; XMP from xanthine: step 1/1. Purine salvage pathway enzyme that catalyzes the transfer of the ribosyl-5-phosphate group from 5-phospho-alpha-D-ribose 1-diphosphate (PRPP) to the N9 position of the 6-oxopurines guanine and xanthine to form the corresponding ribonucleotides GMP (guanosine 5'-monophosphate) and XMP (xanthosine 5'-monophosphate), with the release of PPi. To a lesser extent, also acts on hypoxanthine. This chain is Xanthine-guanine phosphoribosyltransferase, found in Cereibacter sphaeroides (strain ATCC 17029 / ATH 2.4.9) (Rhodobacter sphaeroides).